A 1111-amino-acid polypeptide reads, in one-letter code: Protein NETWORKED 1C (1111 aa).

The 81-residue stretch at 13–93 folds into the NAB domain; that stretch reads YSWWWDSHNT…ERYNHATGVI (81 aa). 3 coiled-coil regions span residues 202–287, 314–605, and 642–752; these read SESE…KESS, ERAS…LISE, and KTIG…LESK. A disordered region spans residues 850–870; sequence TGGGRSMRKQDGGSGRMRKQS. Residues 943-1009 are a coiled coil; it reads NREVNKRRVL…EGEEAIEKLF (67 aa).

It belongs to the NET family.

Functionally, plant-specific actin binding protein. May be part of a membrane-cytoskeletal adapter complex. In Arabidopsis thaliana (Mouse-ear cress), this protein is Protein NETWORKED 1C.